Here is a 352-residue protein sequence, read N- to C-terminus: UDP-N-acetylglucosamine--N-acetylmuramyl-(pentapeptide) pyrophosphoryl-undecaprenol N-acetylglucosamine transferase (352 aa).

S195 and Q287 together coordinate UDP-N-acetyl-alpha-D-glucosamine.

It belongs to the glycosyltransferase 28 family. MurG subfamily.

It is found in the cell membrane. It catalyses the reaction Mur2Ac(oyl-L-Ala-gamma-D-Glu-L-Lys-D-Ala-D-Ala)-di-trans,octa-cis-undecaprenyl diphosphate + UDP-N-acetyl-alpha-D-glucosamine = beta-D-GlcNAc-(1-&gt;4)-Mur2Ac(oyl-L-Ala-gamma-D-Glu-L-Lys-D-Ala-D-Ala)-di-trans,octa-cis-undecaprenyl diphosphate + UDP + H(+). It participates in cell wall biogenesis; peptidoglycan biosynthesis. In terms of biological role, cell wall formation. Catalyzes the transfer of a GlcNAc subunit on undecaprenyl-pyrophosphoryl-MurNAc-pentapeptide (lipid intermediate I) to form undecaprenyl-pyrophosphoryl-MurNAc-(pentapeptide)GlcNAc (lipid intermediate II). This Streptococcus pneumoniae (strain ATCC BAA-255 / R6) protein is UDP-N-acetylglucosamine--N-acetylmuramyl-(pentapeptide) pyrophosphoryl-undecaprenol N-acetylglucosamine transferase.